We begin with the raw amino-acid sequence, 260 residues long: 3'-5' ssDNA/RNA exonuclease TatD (260 aa).

Residues Glu91, His127, and His152 each contribute to the a divalent metal cation site.

It belongs to the metallo-dependent hydrolases superfamily. TatD-type hydrolase family. TatD subfamily. In terms of assembly, monomer. Mg(2+) serves as cofactor.

The protein resides in the cytoplasm. In terms of biological role, 3'-5' exonuclease that prefers single-stranded DNA and RNA. May play a role in the H(2)O(2)-induced DNA damage repair. In Enterobacter lignolyticus (strain SCF1), this protein is 3'-5' ssDNA/RNA exonuclease TatD.